The primary structure comprises 224 residues: ATP synthase subunit a (224 aa).

6 helical membrane-spanning segments follow: residues 17-37 (LSLN…IYWL), 72-92 (IFIS…FPYI), 99-119 (LTLT…YGWI), 125-145 (MFAH…MVCI), 170-190 (LLLT…VTFL), and 195-215 (IALL…FAVL).

This sequence belongs to the ATPase A chain family. F-type ATPases have 2 components, CF(1) - the catalytic core - and CF(0) - the membrane proton channel. CF(1) has five subunits: alpha(3), beta(3), gamma(1), delta(1), epsilon(1). CF(0) has three main subunits: a, b and c.

It is found in the mitochondrion inner membrane. In terms of biological role, mitochondrial membrane ATP synthase (F(1)F(0) ATP synthase or Complex V) produces ATP from ADP in the presence of a proton gradient across the membrane which is generated by electron transport complexes of the respiratory chain. F-type ATPases consist of two structural domains, F(1) - containing the extramembraneous catalytic core and F(0) - containing the membrane proton channel, linked together by a central stalk and a peripheral stalk. During catalysis, ATP synthesis in the catalytic domain of F(1) is coupled via a rotary mechanism of the central stalk subunits to proton translocation. Key component of the proton channel; it may play a direct role in the translocation of protons across the membrane. This is ATP synthase subunit a (mt:ATPase6) from Drosophila mauritiana (Fruit fly).